The following is a 247-amino-acid chain: MSKEPDRLFAQPLPQVPDFAFNEDVVRVFPDMIKRSVPGYPTIVENLGVLAAQFAQPHSVLYDLGSSLGAVTQALRRHVRTDGCRVIAVDNSAAMVERCREYLNGQDSMFQELLPVEVIEGDILALQFAPASVVALNFTLQFIAPDERLALLSRIRQSLLPGGALILSEKLRFNDPEEHALLTDLHIAFKRANGYSELEIAQKRSAIENVMKPDSLEEHRERLLAAGFSTVVPWFQCLNFASLIALP.

Residues Tyr40, 65–67, 90–91, 122–123, Asn137, and Arg204 contribute to the S-adenosyl-L-methionine site; these read GSS, DN, and DI.

This sequence belongs to the class I-like SAM-binding methyltransferase superfamily. Cx-SAM synthase family. As to quaternary structure, homodimer.

The enzyme catalyses prephenate + S-adenosyl-L-methionine = carboxy-S-adenosyl-L-methionine + 3-phenylpyruvate + H2O. In terms of biological role, catalyzes the conversion of S-adenosyl-L-methionine (SAM) to carboxy-S-adenosyl-L-methionine (Cx-SAM). In Pseudomonas fluorescens (strain SBW25), this protein is Carboxy-S-adenosyl-L-methionine synthase.